Here is a 324-residue protein sequence, read N- to C-terminus: tRNA dimethylallyltransferase (324 aa).

17–24 (GPTASGKT) serves as a coordination point for ATP. Substrate is bound at residue 19-24 (TASGKT). Interaction with substrate tRNA stretches follow at residues 42-45 (DSAL), 166-170 (QRIQR), 251-256 (RCVGYR), and 284-291 (KRQITWLR).

Belongs to the IPP transferase family. Monomer. Mg(2+) is required as a cofactor.

It carries out the reaction adenosine(37) in tRNA + dimethylallyl diphosphate = N(6)-dimethylallyladenosine(37) in tRNA + diphosphate. In terms of biological role, catalyzes the transfer of a dimethylallyl group onto the adenine at position 37 in tRNAs that read codons beginning with uridine, leading to the formation of N6-(dimethylallyl)adenosine (i(6)A). The chain is tRNA dimethylallyltransferase from Burkholderia ambifaria (strain MC40-6).